The following is a 121-amino-acid chain: MARIAGIDIPSDKRVVIALTYIYGLGNKLSHKILNELNIDQNIRVKNLTEQQLSALRSEITKYNVEGDLRREVTLNIKRLMEIGAYRGLRHRKGLPVRGQKTRNNAHTVKGKPKAIAGKKK.

The interval 94–121 (GLPVRGQKTRNNAHTVKGKPKAIAGKKK) is disordered. The span at 109–121 (VKGKPKAIAGKKK) shows a compositional bias: basic residues.

Belongs to the universal ribosomal protein uS13 family. Part of the 30S ribosomal subunit. Forms a loose heterodimer with protein S19. Forms two bridges to the 50S subunit in the 70S ribosome.

Located at the top of the head of the 30S subunit, it contacts several helices of the 16S rRNA. In the 70S ribosome it contacts the 23S rRNA (bridge B1a) and protein L5 of the 50S subunit (bridge B1b), connecting the 2 subunits; these bridges are implicated in subunit movement. Contacts the tRNAs in the A and P-sites. In Onion yellows phytoplasma (strain OY-M), this protein is Small ribosomal subunit protein uS13.